Here is a 511-residue protein sequence, read N- to C-terminus: Coatomer subunit delta (511 aa).

The span at 168-177 (QARRDAERQG) shows a compositional bias: basic and acidic residues. The interval 168-188 (QARRDAERQGKKAPGFGGFGS) is disordered. Position 223 is a phosphoserine (Ser-223). Lys-233 and Lys-241 each carry N6-acetyllysine. Position 244 is a phosphoserine (Ser-244). Residues 271-511 (MESVHMKIEE…TFLVDKYEIL (241 aa)) enclose the MHD domain. N6-acetyllysine occurs at positions 309 and 351. Ser-493 is subject to Phosphoserine.

This sequence belongs to the adaptor complexes medium subunit family. Delta-COP subfamily. In terms of assembly, oligomeric complex that consists of at least the alpha, beta, beta', gamma, delta, epsilon and zeta subunits.

The protein localises to the cytoplasm. The protein resides in the golgi apparatus membrane. It is found in the cytoplasmic vesicle. Its subcellular location is the COPI-coated vesicle membrane. Its function is as follows. The coatomer is a cytosolic protein complex that binds to dilysine motifs and reversibly associates with Golgi non-clathrin-coated vesicles, which further mediate biosynthetic protein transport from the ER, via the Golgi up to the trans Golgi network. Coatomer complex is required for budding from Golgi membranes, and is essential for the retrograde Golgi-to-ER transport of dilysine-tagged proteins. In mammals, the coatomer can only be recruited by membranes associated to ADP-ribosylation factors (ARFs), which are small GTP-binding proteins; the complex also influences the Golgi structural integrity, as well as the processing, activity, and endocytic recycling of LDL receptors. This is Coatomer subunit delta (Arcn1) from Rattus norvegicus (Rat).